The following is a 132-amino-acid chain: Putative F-box protein At4g05620 (132 aa).

Residues 17 to 63 (QKKSLSLPHDVLVSCLAHVSRLHYSILSLVLKNFRSLIASPELYKTR) enclose the F-box domain.

In Arabidopsis thaliana (Mouse-ear cress), this protein is Putative F-box protein At4g05620.